Here is a 66-residue protein sequence, read N- to C-terminus: Large ribosomal subunit protein uL29 (66 aa).

The protein belongs to the universal ribosomal protein uL29 family.

The polypeptide is Large ribosomal subunit protein uL29 (Methylibium petroleiphilum (strain ATCC BAA-1232 / LMG 22953 / PM1)).